The chain runs to 347 residues: Chaperone protein DnaJ 1 (347 aa).

The J domain occupies 5-75; it reads DPHSLLGLSP…PAAAPHDAQA (71 aa). Residues 68–77 are compositionally biased toward low complexity; the sequence is AAPHDAQAAD. The segment at 68–91 is disordered; the sequence is AAPHDAQAADARPEPPPEAPPRGA. Residues 107–181 form a CR-type zinc finger; that stretch reads GGEKAFTIAD…CHGSGQARAA (75 aa). Zn(2+)-binding residues include cysteine 120, cysteine 123, cysteine 137, cysteine 140, cysteine 155, cysteine 158, cysteine 169, and cysteine 172. CXXCXGXG motif repeat units follow at residues 120-127, 137-144, 155-162, and 169-176; these read CGACGGSG, CATCHGSG, CADCAGRG, and CGACHGSG.

It belongs to the DnaJ family. Homodimer. The cofactor is Zn(2+).

The protein localises to the cytoplasm. In terms of biological role, participates actively in the response to hyperosmotic and heat shock by preventing the aggregation of stress-denatured proteins and by disaggregating proteins, also in an autonomous, DnaK-independent fashion. Unfolded proteins bind initially to DnaJ; upon interaction with the DnaJ-bound protein, DnaK hydrolyzes its bound ATP, resulting in the formation of a stable complex. GrpE releases ADP from DnaK; ATP binding to DnaK triggers the release of the substrate protein, thus completing the reaction cycle. Several rounds of ATP-dependent interactions between DnaJ, DnaK and GrpE are required for fully efficient folding. Also involved, together with DnaK and GrpE, in the DNA replication of plasmids through activation of initiation proteins. The chain is Chaperone protein DnaJ 1 from Aromatoleum aromaticum (strain DSM 19018 / LMG 30748 / EbN1) (Azoarcus sp. (strain EbN1)).